The sequence spans 364 residues: tRNA N6-adenosine threonylcarbamoyltransferase (364 aa).

Positions 115 and 119 each coordinate Fe cation. Residues 137-141 (LVSGG), aspartate 170, glycine 183, and asparagine 288 each bind substrate. Fe cation is bound at residue aspartate 316.

The protein belongs to the KAE1 / TsaD family. Fe(2+) serves as cofactor.

The protein resides in the cytoplasm. It carries out the reaction L-threonylcarbamoyladenylate + adenosine(37) in tRNA = N(6)-L-threonylcarbamoyladenosine(37) in tRNA + AMP + H(+). Its function is as follows. Required for the formation of a threonylcarbamoyl group on adenosine at position 37 (t(6)A37) in tRNAs that read codons beginning with adenine. Is involved in the transfer of the threonylcarbamoyl moiety of threonylcarbamoyl-AMP (TC-AMP) to the N6 group of A37, together with TsaE and TsaB. TsaD likely plays a direct catalytic role in this reaction. This chain is tRNA N6-adenosine threonylcarbamoyltransferase, found in Bartonella bacilliformis (strain ATCC 35685 / KC583 / Herrer 020/F12,63).